A 247-amino-acid polypeptide reads, in one-letter code: Cell division protein ZapD (247 aa).

This sequence belongs to the ZapD family. In terms of assembly, interacts with FtsZ.

It is found in the cytoplasm. Its function is as follows. Cell division factor that enhances FtsZ-ring assembly. Directly interacts with FtsZ and promotes bundling of FtsZ protofilaments, with a reduction in FtsZ GTPase activity. The polypeptide is Cell division protein ZapD (Citrobacter koseri (strain ATCC BAA-895 / CDC 4225-83 / SGSC4696)).